A 71-amino-acid polypeptide reads, in one-letter code: MSKDDLIQFTGTVLELLPNATFRVKLENDYVIIAHTSGRMRKNRIRILLGDKVTVEMTPYDLTKGRVIHRH.

The region spanning 1 to 71 (MSKDDLIQFT…LTKGRVIHRH (71 aa)) is the S1-like domain.

This sequence belongs to the IF-1 family. As to quaternary structure, component of the 30S ribosomal translation pre-initiation complex which assembles on the 30S ribosome in the order IF-2 and IF-3, IF-1 and N-formylmethionyl-tRNA(fMet); mRNA recruitment can occur at any time during PIC assembly.

The protein localises to the cytoplasm. Functionally, one of the essential components for the initiation of protein synthesis. Stabilizes the binding of IF-2 and IF-3 on the 30S subunit to which N-formylmethionyl-tRNA(fMet) subsequently binds. Helps modulate mRNA selection, yielding the 30S pre-initiation complex (PIC). Upon addition of the 50S ribosomal subunit IF-1, IF-2 and IF-3 are released leaving the mature 70S translation initiation complex. In Rickettsia felis (strain ATCC VR-1525 / URRWXCal2) (Rickettsia azadi), this protein is Translation initiation factor IF-1.